Here is a 343-residue protein sequence, read N- to C-terminus: Protein RecA (343 aa).

Position 65-72 (65-72 (GPESSGKT)) interacts with ATP.

Belongs to the RecA family.

Its subcellular location is the cytoplasm. In terms of biological role, can catalyze the hydrolysis of ATP in the presence of single-stranded DNA, the ATP-dependent uptake of single-stranded DNA by duplex DNA, and the ATP-dependent hybridization of homologous single-stranded DNAs. It interacts with LexA causing its activation and leading to its autocatalytic cleavage. This chain is Protein RecA, found in Xanthomonas campestris pv. campestris (strain 8004).